We begin with the raw amino-acid sequence, 488 residues long: N-succinylglutamate 5-semialdehyde dehydrogenase (488 aa).

An NAD(+)-binding site is contributed by 221–226; that stretch reads GSSRTG. Active-site residues include glutamate 244 and cysteine 278.

The protein belongs to the aldehyde dehydrogenase family. AstD subfamily.

The catalysed reaction is N-succinyl-L-glutamate 5-semialdehyde + NAD(+) + H2O = N-succinyl-L-glutamate + NADH + 2 H(+). The protein operates within amino-acid degradation; L-arginine degradation via AST pathway; L-glutamate and succinate from L-arginine: step 4/5. Functionally, catalyzes the NAD-dependent reduction of succinylglutamate semialdehyde into succinylglutamate. This Pseudomonas syringae pv. syringae (strain B728a) protein is N-succinylglutamate 5-semialdehyde dehydrogenase.